The chain runs to 247 residues: Acetoacetate decarboxylase (247 aa).

Catalysis depends on lysine 116, which acts as the Schiff-base intermediate with acetoacetate.

This sequence belongs to the ADC family.

The catalysed reaction is acetoacetate + H(+) = acetone + CO2. Functionally, catalyzes the conversion of acetoacetate to acetone and carbon dioxide. This is Acetoacetate decarboxylase from Ralstonia nicotianae (strain ATCC BAA-1114 / GMI1000) (Ralstonia solanacearum).